The chain runs to 254 residues: Zinc finger FYVE domain-containing protein 21 (254 aa).

The FYVE-type zinc-finger motif lies at 44–104 (DKECPRCMQC…QCAGCAPVSR (61 aa)). Residues Cys-50, Cys-53, Cys-66, Cys-69, Cys-74, Cys-77, Cys-96, and Cys-99 each contribute to the Zn(2+) site. The PH-like stretch occupies residues 107 to 254 (ADFYDRQLKL…AKLLYESRDQ (148 aa)).

In terms of assembly, interacts with PTK2/FAK1.

The protein resides in the cell junction. Its subcellular location is the focal adhesion. The protein localises to the cytoplasmic vesicle. It localises to the endosome. Functionally, plays a role in cell adhesion, and thereby in cell motility which requires repeated formation and disassembly of focal adhesions. Regulates microtubule-induced PTK2/FAK1 dephosphorylation, an event important for focal adhesion disassembly, as well as integrin beta-1/ITGB1 cell surface expression. In Bos taurus (Bovine), this protein is Zinc finger FYVE domain-containing protein 21 (ZFYVE21).